The chain runs to 170 residues: Photosystem I assembly protein Ycf3 (170 aa).

3 TPR repeats span residues Ala35 to Pro69, Ser73 to Leu106, and Gly121 to Asn154.

The protein belongs to the Ycf3 family.

The protein resides in the plastid. It localises to the chloroplast thylakoid membrane. In terms of biological role, essential for the assembly of the photosystem I (PSI) complex. May act as a chaperone-like factor to guide the assembly of the PSI subunits. In Cycas taitungensis (Prince sago), this protein is Photosystem I assembly protein Ycf3.